A 678-amino-acid polypeptide reads, in one-letter code: Exoribonuclease 2 (678 aa).

The region spanning 193–521 (REDLTALPFV…INHRLLKAHI (329 aa)) is the RNB domain. Residues 568-650 (ETRFQAEIFD…ENRSLVGKPT (83 aa)) form the S1 motif domain. The interval 659-678 (ETQTSAEQPAEGAENNEPQV) is disordered.

The protein belongs to the RNR ribonuclease family. RNase II subfamily.

The protein localises to the cytoplasm. The enzyme catalyses Exonucleolytic cleavage in the 3'- to 5'-direction to yield nucleoside 5'-phosphates.. Its function is as follows. Involved in mRNA degradation. Hydrolyzes single-stranded polyribonucleotides processively in the 3' to 5' direction. The protein is Exoribonuclease 2 of Vibrio cholerae serotype O1 (strain ATCC 39315 / El Tor Inaba N16961).